Here is a 101-residue protein sequence, read N- to C-terminus: Small ribosomal subunit protein uS10 (101 aa).

It belongs to the universal ribosomal protein uS10 family. Part of the 30S ribosomal subunit.

Its function is as follows. Involved in the binding of tRNA to the ribosomes. In Christiangramia forsetii (strain DSM 17595 / CGMCC 1.15422 / KT0803) (Gramella forsetii), this protein is Small ribosomal subunit protein uS10.